We begin with the raw amino-acid sequence, 860 residues long: Translation initiation factor IF-2 (860 aa).

Basic and acidic residues predominate over residues 1-11; it reads MSDTKSGDDKT. The interval 1 to 265 is disordered; sequence MSDTKSGDDK…MRRRQEKFKR (265 aa). Positions 79-88 are enriched in low complexity; it reads AAPVVQEAPK. A compositionally biased stretch (basic and acidic residues) spans 110-183; that stretch reads SRSEMEARRR…RRRAEEEARR (74 aa). The 168-residue stretch at 358-525 folds into the tr-type G domain; that stretch reads PRPPVVTIMG…AILLQAEILD (168 aa). Residues 367–374 are G1; that stretch reads GHVDHGKT. 367–374 serves as a coordination point for GTP; that stretch reads GHVDHGKT. A G2 region spans residues 392–396; it reads GITQH. The tract at residues 413–416 is G3; that stretch reads DTPG. Residues 413–417 and 467–470 contribute to the GTP site; these read DTPGH and NKID. The G4 stretch occupies residues 467-470; sequence NKID. The interval 503 to 505 is G5; the sequence is SAT.

It belongs to the TRAFAC class translation factor GTPase superfamily. Classic translation factor GTPase family. IF-2 subfamily.

The protein resides in the cytoplasm. One of the essential components for the initiation of protein synthesis. Protects formylmethionyl-tRNA from spontaneous hydrolysis and promotes its binding to the 30S ribosomal subunits. Also involved in the hydrolysis of GTP during the formation of the 70S ribosomal complex. This chain is Translation initiation factor IF-2, found in Mesorhizobium japonicum (strain LMG 29417 / CECT 9101 / MAFF 303099) (Mesorhizobium loti (strain MAFF 303099)).